We begin with the raw amino-acid sequence, 58 residues long: Small ribosomal subunit protein bS21 (58 aa).

The tract at residues 39 to 58 (DKPSVKKRAKSKAAAKYRSR) is disordered. Residues 43 to 58 (VKKRAKSKAAAKYRSR) are compositionally biased toward basic residues.

This sequence belongs to the bacterial ribosomal protein bS21 family.

The chain is Small ribosomal subunit protein bS21 from Chlamydia abortus (strain DSM 27085 / S26/3) (Chlamydophila abortus).